The sequence spans 327 residues: Cytochrome c oxidase subunit 2 (327 aa).

The signal sequence occupies residues 1–23 (MEQIPASIWTLTAGVVVTLISFW). A run of 2 helical transmembrane segments spans residues 56 to 78 (LFLVVQGAIILFVIRYRRRAGEE) and 96 to 114 (AIPALIVIFLGIYSVDIFQ). The Cu cation site is built by H221, C255, C259, and H263.

Belongs to the cytochrome c oxidase subunit 2 family. The cofactor is Cu cation.

The protein resides in the cell membrane. The catalysed reaction is 4 Fe(II)-[cytochrome c] + O2 + 8 H(+)(in) = 4 Fe(III)-[cytochrome c] + 2 H2O + 4 H(+)(out). Subunits I and II form the functional core of the enzyme complex. Electrons originating in cytochrome c are transferred via heme a and Cu(A) to the binuclear center formed by heme a3 and Cu(B). The chain is Cytochrome c oxidase subunit 2 (ctaC) from Thermostichus vulcanus (Synechococcus vulcanus).